The following is a 220-amino-acid chain: Ribosomal RNA large subunit methyltransferase E (220 aa).

S-adenosyl-L-methionine is bound by residues G60, W62, D92, D108, and D133. The active-site Proton acceptor is the K173. The tract at residues 197 to 220 (RKPKASRDKSSETFILGRQLKQPR) is disordered.

It belongs to the class I-like SAM-binding methyltransferase superfamily. RNA methyltransferase RlmE family.

It localises to the cytoplasm. It catalyses the reaction uridine(2552) in 23S rRNA + S-adenosyl-L-methionine = 2'-O-methyluridine(2552) in 23S rRNA + S-adenosyl-L-homocysteine + H(+). Specifically methylates the uridine in position 2552 of 23S rRNA at the 2'-O position of the ribose in the fully assembled 50S ribosomal subunit. The sequence is that of Ribosomal RNA large subunit methyltransferase E from Burkholderia ambifaria (strain MC40-6).